Reading from the N-terminus, the 421-residue chain is Probable dual-specificity RNA methyltransferase RlmN (421 aa).

Positions 1–23 (MTATTAESGRPDQPPTAEAGRPV) are disordered. Glu127 (proton acceptor) is an active-site residue. The region spanning 133–372 (YPDRATVCVS…VTTVRDTRGR (240 aa)) is the Radical SAM core domain. Cys140 and Cys378 are disulfide-bonded. The [4Fe-4S] cluster site is built by Cys147, Cys151, and Cys154. S-adenosyl-L-methionine contacts are provided by residues 202-203 (GE), Ser236, 259-261 (SLH), and Asn335. Catalysis depends on Cys378, which acts as the S-methylcysteine intermediate. The segment at 383 to 421 (AEPAGKPERTDRPEQVGSDRLVEFGAVGSTTPDGDRVLR) is disordered. Over residues 387 to 396 (GKPERTDRPE) the composition is skewed to basic and acidic residues.

This sequence belongs to the radical SAM superfamily. RlmN family. The cofactor is [4Fe-4S] cluster.

The protein resides in the cytoplasm. The catalysed reaction is adenosine(2503) in 23S rRNA + 2 reduced [2Fe-2S]-[ferredoxin] + 2 S-adenosyl-L-methionine = 2-methyladenosine(2503) in 23S rRNA + 5'-deoxyadenosine + L-methionine + 2 oxidized [2Fe-2S]-[ferredoxin] + S-adenosyl-L-homocysteine. It carries out the reaction adenosine(37) in tRNA + 2 reduced [2Fe-2S]-[ferredoxin] + 2 S-adenosyl-L-methionine = 2-methyladenosine(37) in tRNA + 5'-deoxyadenosine + L-methionine + 2 oxidized [2Fe-2S]-[ferredoxin] + S-adenosyl-L-homocysteine. In terms of biological role, specifically methylates position 2 of adenine 2503 in 23S rRNA and position 2 of adenine 37 in tRNAs. The chain is Probable dual-specificity RNA methyltransferase RlmN from Frankia casuarinae (strain DSM 45818 / CECT 9043 / HFP020203 / CcI3).